The primary structure comprises 382 residues: Mannitol-1-phosphate 5-dehydrogenase (382 aa).

3–14 (ALHFGAGNIGRG) serves as a coordination point for NAD(+).

It belongs to the mannitol dehydrogenase family.

It carries out the reaction D-mannitol 1-phosphate + NAD(+) = beta-D-fructose 6-phosphate + NADH + H(+). The sequence is that of Mannitol-1-phosphate 5-dehydrogenase from Klebsiella pneumoniae (strain 342).